A 164-amino-acid chain; its full sequence is Endoribonuclease YbeY (164 aa).

His130, His134, and His140 together coordinate Zn(2+).

This sequence belongs to the endoribonuclease YbeY family. It depends on Zn(2+) as a cofactor.

It localises to the cytoplasm. Functionally, single strand-specific metallo-endoribonuclease involved in late-stage 70S ribosome quality control and in maturation of the 3' terminus of the 16S rRNA. The polypeptide is Endoribonuclease YbeY (Streptococcus mutans serotype c (strain ATCC 700610 / UA159)).